We begin with the raw amino-acid sequence, 368 residues long: tRNA-specific 2-thiouridylase MnmA (368 aa).

ATP contacts are provided by residues 11–18 and Met-37; that span reads GMSGGVDS. Residues 97-99 are interaction with target base in tRNA; that stretch reads NPD. The active-site Nucleophile is Cys-102. A disulfide bond links Cys-102 and Cys-199. Gly-127 is an ATP binding site. The segment at 149 to 151 is interaction with tRNA; the sequence is KDQ. Cys-199 (cysteine persulfide intermediate) is an active-site residue. Residues 311–312 form an interaction with tRNA region; the sequence is RY.

This sequence belongs to the MnmA/TRMU family. As to quaternary structure, interacts with TusE.

The protein resides in the cytoplasm. The enzyme catalyses S-sulfanyl-L-cysteinyl-[protein] + uridine(34) in tRNA + AH2 + ATP = 2-thiouridine(34) in tRNA + L-cysteinyl-[protein] + A + AMP + diphosphate + H(+). In terms of biological role, catalyzes the 2-thiolation of uridine at the wobble position (U34) of tRNA(Lys), tRNA(Glu) and tRNA(Gln), leading to the formation of s(2)U34, the first step of tRNA-mnm(5)s(2)U34 synthesis. Sulfur is provided by IscS, via a sulfur-relay system. Binds ATP and its substrate tRNAs. In Salmonella typhimurium (strain LT2 / SGSC1412 / ATCC 700720), this protein is tRNA-specific 2-thiouridylase MnmA.